The following is a 503-amino-acid chain: ATP synthase subunit alpha, chloroplastic (503 aa).

Position 170-177 (170-177 (GDRQTGKT)) interacts with ATP.

This sequence belongs to the ATPase alpha/beta chains family. F-type ATPases have 2 components, CF(1) - the catalytic core - and CF(0) - the membrane proton channel. CF(1) has five subunits: alpha(3), beta(3), gamma(1), delta(1), epsilon(1). CF(0) has four main subunits: a, b, b' and c.

The protein localises to the plastid. Its subcellular location is the chloroplast thylakoid membrane. The enzyme catalyses ATP + H2O + 4 H(+)(in) = ADP + phosphate + 5 H(+)(out). Functionally, produces ATP from ADP in the presence of a proton gradient across the membrane. The alpha chain is a regulatory subunit. The sequence is that of ATP synthase subunit alpha, chloroplastic from Thalassiosira pseudonana (Marine diatom).